A 422-amino-acid polypeptide reads, in one-letter code: 2,3-bisphosphoglycerate-independent phosphoglycerate mutase (422 aa).

The segment at 173 to 194 (DADPKRVGKPVKDVKPTSDDPA) is disordered. Positions 174-190 (ADPKRVGKPVKDVKPTS) are enriched in basic and acidic residues.

The protein belongs to the BPG-independent phosphoglycerate mutase family. A-PGAM subfamily.

The catalysed reaction is (2R)-2-phosphoglycerate = (2R)-3-phosphoglycerate. It participates in carbohydrate degradation; glycolysis; pyruvate from D-glyceraldehyde 3-phosphate: step 3/5. Functionally, catalyzes the interconversion of 2-phosphoglycerate and 3-phosphoglycerate. In Methanopyrus kandleri (strain AV19 / DSM 6324 / JCM 9639 / NBRC 100938), this protein is 2,3-bisphosphoglycerate-independent phosphoglycerate mutase.